Reading from the N-terminus, the 229-residue chain is Peptidase E (229 aa).

Residues Ser-120, Asp-135, and His-157 each act as charge relay system in the active site.

Belongs to the peptidase S51 family.

It localises to the cytoplasm. The catalysed reaction is Dipeptidase E catalyzes the hydrolysis of dipeptides Asp-|-Xaa. It does not act on peptides with N-terminal Glu, Asn or Gln, nor does it cleave isoaspartyl peptides.. Functionally, hydrolyzes dipeptides containing N-terminal aspartate residues. May play a role in allowing the cell to use peptide aspartate to spare carbon otherwise required for the synthesis of the aspartate family of amino acids. The sequence is that of Peptidase E from Shigella boydii serotype 18 (strain CDC 3083-94 / BS512).